A 484-amino-acid chain; its full sequence is uncharacterized protein (484 aa).

The 180-residue stretch at 47–226 (TLPIPAAVVK…TEVTVKIFKF (180 aa)) folds into the FAD-binding PCMH-type domain.

It belongs to the FAD-binding oxidoreductase/transferase type 4 family.

This is an uncharacterized protein from Escherichia coli (strain K12).